A 1435-amino-acid chain; its full sequence is DNA polymerase III PolC-type (1435 aa).

The Exonuclease domain maps to 420–576 (YVVFDVETTG…YDTEATGYLL (157 aa)).

This sequence belongs to the DNA polymerase type-C family. PolC subfamily.

The protein localises to the cytoplasm. It catalyses the reaction DNA(n) + a 2'-deoxyribonucleoside 5'-triphosphate = DNA(n+1) + diphosphate. Functionally, required for replicative DNA synthesis. This DNA polymerase also exhibits 3' to 5' exonuclease activity. This chain is DNA polymerase III PolC-type, found in Bacillus cereus (strain ATCC 14579 / DSM 31 / CCUG 7414 / JCM 2152 / NBRC 15305 / NCIMB 9373 / NCTC 2599 / NRRL B-3711).